Here is a 264-residue protein sequence, read N- to C-terminus: Major prion protein (264 aa).

Positions 1–24 (MVKSHIGSWILVLFVAMWSDVGLC) are cleaved as a signal peptide. An interaction with GRB2, ERI3 and SYN1 region spans residues 25-241 (KKRPKPGGGW…ESQAYYQRGA (217 aa)). Residues 28-118 (PKPGGGWNTG…QWNKPSKPKT (91 aa)) are disordered. Residues 37-54 (GGSRYPGPGSPGGNRYPP) are compositionally biased toward low complexity. 6 repeat units span residues 54 to 62 (PQGGGGWGQ), 63 to 70 (PHGGGWGQ), 71 to 78 (PHGGGWGQ), 79 to 86 (PHGGGWGQ), 87 to 94 (PHGGGWGQ), and 95 to 103 (PHGGGGWGQ). Residues 54–103 (PQGGGGWGQPHGGGWGQPHGGGWGQPHGGGWGQPHGGGWGQPHGGGGWGQ) are 6 X 8 AA tandem repeats of P-H-G-G-G-W-G-Q. A compositionally biased stretch (gly residues) spans 55–107 (QGGGGWGQPHGGGWGQPHGGGWGQPHGGGWGQPHGGGWGQPHGGGGWGQGGTH). Residues His-72, Gly-73, Gly-74, His-80, Gly-81, Gly-82, His-88, Gly-89, Gly-90, His-96, and Gly-98 each contribute to the Cu(2+) site. Cys-190 and Cys-225 are joined by a disulfide. Residues Asn-192 and Asn-208 are each glycosylated (N-linked (GlcNAc...) asparagine). Ala-241 carries GPI-anchor amidated alanine lipidation. A propeptide spans 242–264 (SVILFSSPPVILLISFLIFLIVG) (removed in mature form).

It belongs to the prion family. As to quaternary structure, monomer and homodimer. Has a tendency to aggregate into amyloid fibrils containing a cross-beta spine, formed by a steric zipper of superposed beta-strands. Soluble oligomers may represent an intermediate stage on the path to fibril formation. Copper binding may promote oligomerization. Interacts with GRB2, APP, ERI3/PRNPIP and SYN1. Mislocalized cytosolically exposed PrP interacts with MGRN1; this interaction alters MGRN1 subcellular location and causes lysosomal enlargement. Interacts with KIAA1191.

The protein resides in the cell membrane. The protein localises to the golgi apparatus. In terms of biological role, its primary physiological function is unclear. Has cytoprotective activity against internal or environmental stresses. May play a role in neuronal development and synaptic plasticity. May be required for neuronal myelin sheath maintenance. May play a role in iron uptake and iron homeostasis. Soluble oligomers are toxic to cultured neuroblastoma cells and induce apoptosis (in vitro). Association with GPC1 (via its heparan sulfate chains) targets PRNP to lipid rafts. Also provides Cu(2+) or Zn(2+) for the ascorbate-mediated GPC1 deaminase degradation of its heparan sulfate side chains. The chain is Major prion protein (PRNP) from Ailuropoda melanoleuca (Giant panda).